The primary structure comprises 449 residues: MREVISIHVGQAGIQVGNACWELFCLEHGIQPDGQMPSNKTIGGGDDAFNTFFSETGTGKHVPRCVFLDLGPTVIDEVRTGTYRQLFHPEQLISGKEDAANNFARGHYTIGKEIVDLCLDGIRKLADQCTGLQGFLVFNSVGGGTGSGLGSLLLERLSVDYGKKSKLGFTIYPSPQVSTAVVEPYNSVLSTHSLLEHTDVAVMLDNEAVYDICRRNLDIERPTYTNLNRLIAQVISSLTASLRFDGALNVDVTEFQTNLVPYPRIHFMLSSAPVISAEKAYHEQLSVAEITNSAFEPASMMAKCDPRHGKYMACCLMYRGDVVPKDVNAAVATIKTKRTIQFVDWCPTGFKCGINYQPPTVVPSGDLAKVMRAVCMISNSTAIAEVFSRIDHKFDLMYAKRAFVHWYVGEGMEEGEFSEAREDLAALEKDYEEVGIETAEGEGEEEGME.

Gln11 contacts GTP. Lys40 carries the N6-acetyllysine modification. GTP-binding residues include Ser140, Gly144, Thr145, Thr179, Asn206, and Asn228. Glu254 is a catalytic residue.

This sequence belongs to the tubulin family. Dimer of alpha and beta chains. A typical microtubule is a hollow water-filled tube with an outer diameter of 25 nm and an inner diameter of 15 nM. Alpha-beta heterodimers associate head-to-tail to form protofilaments running lengthwise along the microtubule wall with the beta-tubulin subunit facing the microtubule plus end conferring a structural polarity. Microtubules usually have 13 protofilaments but different protofilament numbers can be found in some organisms and specialized cells. Acetylation of alpha chains at Lys-40 stabilizes microtubules and affects affinity and processivity of microtubule motors. This modification has a role in multiple cellular functions, ranging from cell motility, cell cycle progression or cell differentiation to intracellular trafficking and signaling.

Its subcellular location is the cytoplasm. The protein resides in the cytoskeleton. The enzyme catalyses GTP + H2O = GDP + phosphate + H(+). Its function is as follows. Tubulin is the major constituent of microtubules, a cylinder consisting of laterally associated linear protofilaments composed of alpha- and beta-tubulin heterodimers. Microtubules grow by the addition of GTP-tubulin dimers to the microtubule end, where a stabilizing cap forms. Below the cap, tubulin dimers are in GDP-bound state, owing to GTPase activity of alpha-tubulin. The sequence is that of Tubulin alpha-2 chain from Stylonychia lemnae (Ciliate).